We begin with the raw amino-acid sequence, 324 residues long: Putative HTH-type transcriptional regulatory protein UNCMA_15260 (324 aa).

Residues 132-189 (LRSLREAKNISLGELAMALGVSRRTISKYESGMNATIEAALKLEEILDAPIACPVNMI) form the HTH cro/C1-type domain. Positions 143–162 (LGELAMALGVSRRTISKYES) form a DNA-binding region, H-T-H motif.

The protein is Putative HTH-type transcriptional regulatory protein UNCMA_15260 of Methanocella arvoryzae (strain DSM 22066 / NBRC 105507 / MRE50).